Here is a 398-residue protein sequence, read N- to C-terminus: Protein CDKN2AIP homolog A (398 aa).

The 106-residue stretch at Leu-19–Ser-124 folds into the XRN2-binding (XTBD) domain. A disordered region spans residues Lys-118 to Arg-245. Over residues Glu-131–Ser-147 the composition is skewed to basic and acidic residues. 3 stretches are compositionally biased toward polar residues: residues Ser-154 to Leu-163, Arg-189 to Ser-199, and Gln-226 to Asn-238.

It belongs to the CARF family.

Its subcellular location is the nucleus. It is found in the nucleoplasm. Functionally, may regulate DNA damage response and cell proliferation. This chain is Protein CDKN2AIP homolog A (cdkn2aip-a), found in Xenopus laevis (African clawed frog).